Consider the following 364-residue polypeptide: DNA replication and repair protein RecF (364 aa).

30 to 37 (GNNAQGKT) is an ATP binding site.

It belongs to the RecF family.

It is found in the cytoplasm. Its function is as follows. The RecF protein is involved in DNA metabolism; it is required for DNA replication and normal SOS inducibility. RecF binds preferentially to single-stranded, linear DNA. It also seems to bind ATP. The polypeptide is DNA replication and repair protein RecF (Clostridium botulinum (strain Loch Maree / Type A3)).